The following is a 44-amino-acid chain: Small, acid-soluble spore protein N (44 aa).

The disordered stretch occupies residues 1–44; the sequence is MGNPKKNSKDFAPNHIGTQSKKAGGNKGKQMQDQTGKQPIVDNG.

It belongs to the SspN family.

It localises to the spore core. The protein is Small, acid-soluble spore protein N of Bacillus anthracis (strain A0248).